Reading from the N-terminus, the 364-residue chain is Putative agmatine deiminase 1 (364 aa).

Cysteine 356 serves as the catalytic Amidino-cysteine intermediate.

This sequence belongs to the agmatine deiminase family.

It carries out the reaction agmatine + H2O = N-carbamoylputrescine + NH4(+). This Listeria monocytogenes serotype 4b (strain F2365) protein is Putative agmatine deiminase 1.